The chain runs to 428 residues: Phosphomethylpyrimidine synthase 2 (428 aa).

Substrate is bound by residues asparagine 65, methionine 94, tyrosine 123, histidine 158, 180–182 (SRG), 221–224 (DGMR), and glutamate 260. Residue histidine 264 coordinates Zn(2+). Position 287 (tyrosine 287) interacts with substrate. Histidine 328 contacts Zn(2+). Cysteine 405, cysteine 408, and cysteine 412 together coordinate [4Fe-4S] cluster.

The protein belongs to the ThiC family. [4Fe-4S] cluster serves as cofactor.

It carries out the reaction 5-amino-1-(5-phospho-beta-D-ribosyl)imidazole + S-adenosyl-L-methionine = 4-amino-2-methyl-5-(phosphooxymethyl)pyrimidine + CO + 5'-deoxyadenosine + formate + L-methionine + 3 H(+). Its pathway is cofactor biosynthesis; thiamine diphosphate biosynthesis. In terms of biological role, catalyzes the synthesis of the hydroxymethylpyrimidine phosphate (HMP-P) moiety of thiamine from aminoimidazole ribotide (AIR) in a radical S-adenosyl-L-methionine (SAM)-dependent reaction. This chain is Phosphomethylpyrimidine synthase 2, found in Methanosarcina barkeri (strain Fusaro / DSM 804).